Reading from the N-terminus, the 105-residue chain is Tyrosine-protein phosphatase 12 (105 aa).

The 105-residue stretch at 1 to 105 (WRMIWEKRVE…NLRRIVRTEF (105 aa)) folds into the Tyrosine-protein phosphatase domain. Asp84 is a substrate binding site.

The protein belongs to the protein-tyrosine phosphatase family.

It carries out the reaction O-phospho-L-tyrosyl-[protein] + H2O = L-tyrosyl-[protein] + phosphate. The protein is Tyrosine-protein phosphatase 12 (STY-12) of Styela plicata (Wrinkled sea squirt).